The following is a 63-amino-acid chain: MKAKELREKSVEELNTELLNLLREQFNLRMQAASGQLQQSHLLKQVRRDVARVKTLLNEKAGA.

The protein belongs to the universal ribosomal protein uL29 family.

In Escherichia coli O8 (strain IAI1), this protein is Large ribosomal subunit protein uL29.